We begin with the raw amino-acid sequence, 371 residues long: Carnitine monooxygenase oxygenase subunit (371 aa).

In terms of domain architecture, Rieske spans 44–152; sequence WICVAHSSEL…VEEYAGFLFI (109 aa). 4 residues coordinate [2Fe-2S] cluster: Cys86, His88, Cys106, and His109. Fe cation contacts are provided by His208, His213, and Asp323.

It belongs to the bacterial ring-hydroxylating dioxygenase alpha subunit family. CntA subfamily. Composed of an oxygenase subunit (cntA) and a reductase subunit (cntB). [2Fe-2S] cluster serves as cofactor. Requires Fe cation as cofactor.

The catalysed reaction is (R)-carnitine + NADH + O2 + H(+) = (3R)-3-hydroxy-4-oxobutanoate + trimethylamine + NAD(+) + H2O. It carries out the reaction (R)-carnitine + NADPH + O2 + H(+) = (3R)-3-hydroxy-4-oxobutanoate + trimethylamine + NADP(+) + H2O. Its pathway is amine and polyamine metabolism; carnitine metabolism. Its function is as follows. Converts carnitine to trimethylamine and malic semialdehyde. The sequence is that of Carnitine monooxygenase oxygenase subunit from Acinetobacter baumannii (strain ATCC 19606 / DSM 30007 / JCM 6841 / CCUG 19606 / CIP 70.34 / NBRC 109757 / NCIMB 12457 / NCTC 12156 / 81).